We begin with the raw amino-acid sequence, 166 residues long: Small ribosomal subunit protein uS5 (166 aa).

In terms of domain architecture, S5 DRBM spans 11 to 74; sequence LQEKLIAVNR…EKARRNMINV (64 aa).

This sequence belongs to the universal ribosomal protein uS5 family. Part of the 30S ribosomal subunit. Contacts proteins S4 and S8.

With S4 and S12 plays an important role in translational accuracy. In terms of biological role, located at the back of the 30S subunit body where it stabilizes the conformation of the head with respect to the body. This Actinobacillus pleuropneumoniae serotype 5b (strain L20) protein is Small ribosomal subunit protein uS5.